Consider the following 97-residue polypeptide: RLPPQQIEKSPWSNKYDPPLEDGAMPSARGCWDSIHVVEVQEKSGSGTMNLGGSLTRQMEKDETVSDCSPHIANIGRLVEDMENKIRSTLNEIYFGK.

Disordered regions lie at residues 1–27 and 43–66; these read RLPPQQIEKSPWSNKYDPPLEDGAMPS and KSGSGTMNLGGSLTRQMEKDETVS. The segment covering 43–57 has biased composition (polar residues); the sequence is KSGSGTMNLGGSLTR. Position 97 is an N6-acetyllysine (Lys97).

It belongs to the F-actin-capping protein beta subunit family. Component of the F-actin capping complex, composed of a heterodimer of an alpha and a beta subunit. Subunit of dynactin, a multiprotein complex part of a tripartite complex with dynein and a adapter, such as BICDL1, BICD2 or HOOK3. The dynactin complex is built around ACTR1A/ACTB filament and consists of an actin-related filament composed of a shoulder domain, a pointed end and a barbed end. Its length is defined by its flexible shoulder domain. The soulder is composed of 2 DCTN1 subunits, 4 DCTN2 and 2 DCTN3. The 4 DCNT2 (via N-terminus) bind the ACTR1A filament and act as molecular rulers to determine the length. The pointed end is important for binding dynein-dynactin cargo adapters. Consists of 4 subunits: ACTR10, DCNT4, DCTN5 and DCTN6. The barbed end is composed of a CAPZA1:CAPZB heterodimers, which binds ACTR1A/ACTB filament and dynactin and stabilizes dynactin. Interacts with ARHGAP17. Interaction with RCSD1/CAPZIP. Component of the WASH complex, composed of F-actin-capping protein subunit alpha (CAPZA1, CAPZA2 or CAPZA3), F-actin-capping protein subunit beta (CAPZB), WASH (WASHC1, WASH2P, WASH3P, WASH4P, WASH5P or WASH6P), WASHC2 (WASHC2A or WASHC2C), WASHC3, WASHC4 and WASHC5. Interacts with ACTG1. Directly interacts with CRACD; this interaction decreases binding to actin.

The protein localises to the cytoplasm. It is found in the cytoskeleton. Its subcellular location is the myofibril. It localises to the sarcomere. Its function is as follows. F-actin-capping proteins bind in a Ca(2+)-independent manner to the fast growing ends of actin filaments (barbed end) thereby blocking the exchange of subunits at these ends. Unlike other capping proteins (such as gelsolin and severin), these proteins do not sever actin filaments. Plays a role in the regulation of cell morphology and cytoskeletal organization. Forms, with CAPZB, the barbed end of the fast growing ends of actin filaments in the dynactin complex and stabilizes dynactin structure. The dynactin multiprotein complex activates the molecular motor dynein for ultra-processive transport along microtubules. The sequence is that of F-actin-capping protein subunit beta from Mesocricetus auratus (Golden hamster).